The primary structure comprises 376 residues: Erythronate-4-phosphate dehydrogenase (376 aa).

Positions 45 and 67 each coordinate substrate. An NAD(+)-binding site is contributed by Asp147. The active site involves Arg209. Asp233 is an NAD(+) binding site. Glu238 is an active-site residue. His255 serves as the catalytic Proton donor. Gly258 is a binding site for NAD(+). Residue Tyr259 participates in substrate binding.

It belongs to the D-isomer specific 2-hydroxyacid dehydrogenase family. PdxB subfamily. As to quaternary structure, homodimer.

The protein resides in the cytoplasm. The catalysed reaction is 4-phospho-D-erythronate + NAD(+) = (R)-3-hydroxy-2-oxo-4-phosphooxybutanoate + NADH + H(+). The protein operates within cofactor biosynthesis; pyridoxine 5'-phosphate biosynthesis; pyridoxine 5'-phosphate from D-erythrose 4-phosphate: step 2/5. Its function is as follows. Catalyzes the oxidation of erythronate-4-phosphate to 3-hydroxy-2-oxo-4-phosphonooxybutanoate. The polypeptide is Erythronate-4-phosphate dehydrogenase (Shewanella sp. (strain W3-18-1)).